The chain runs to 236 residues: Translocon-associated protein subunit alpha (236 aa).

Positions 1 to 20 (MNKLITLLLAVLMIISCVYS) are cleaved as a signal peptide. Residues 21-163 (DDVEITDDEV…TEKETSFDMD (143 aa)) lie on the Lumenal side of the membrane. 5 N-linked (GlcNAc...) asparagine glycosylation sites follow: N74, N94, N141, N148, and N152. Residues 164–184 (SFFLILLGLGFVGGIGYIVYG) form a helical membrane-spanning segment. The Cytoplasmic portion of the chain corresponds to 185 to 236 (KMPKQKKVRTVSKVNKNAVRVETEDETAEWLSGTSAASSKVKSVQKVVKKNK).

This sequence belongs to the TRAP-alpha family. As to quaternary structure, heterotrimer of TRAP-alpha, TRAP-beta and TRAP-gamma. Phosphorylated in its cytoplasmic tail.

Its subcellular location is the endoplasmic reticulum membrane. Functionally, TRAP proteins are part of a complex whose function is to bind calcium to the ER membrane and thereby regulate the retention of ER resident proteins. The chain is Translocon-associated protein subunit alpha (ssr1) from Dictyostelium discoideum (Social amoeba).